We begin with the raw amino-acid sequence, 342 residues long: MADLRSTFLNVYSVLKSELLHDPAFEFSPDSRQWLDRMLDYNVPGGKLNRGLSVIDSYRLLKDGHELNDDEIFLASALGWCIEWLQAYFLVLDDIMDNSHTRRGQPCWFRVPKVGMIAANDGVLLRNHIPRILKKHFRGKPYYADLLDLFNEVEFQTASGQMIDLITTLEGEKDLSKYTLSLHRRIVQYKTAYYSFYLPVACALLMVGENLDNHIDVKNILVDMGTYFQVQDDYLDCFGAPETIGKIGTDIEDFKCSWLVVKALELSNDEQKKVLYDNYGKPDPANVAKVKALYDELNLQGVFTEYESKSYEKLVTSIEAHPSKAVQALLKSFLGKIYKRQK.

Lys-47, Arg-50, and Gln-86 together coordinate isopentenyl diphosphate. Asp-93 and Asp-97 together coordinate Mg(2+). Arg-102 provides a ligand contact to dimethylallyl diphosphate. An isopentenyl diphosphate-binding site is contributed by Arg-103. Residues Lys-190, Thr-191, Gln-229, Lys-246, and Lys-255 each coordinate dimethylallyl diphosphate.

The protein belongs to the FPP/GGPP synthase family. It depends on Mg(2+) as a cofactor.

The protein resides in the cytoplasm. It catalyses the reaction isopentenyl diphosphate + dimethylallyl diphosphate = (2E)-geranyl diphosphate + diphosphate. The enzyme catalyses isopentenyl diphosphate + (2E)-geranyl diphosphate = (2E,6E)-farnesyl diphosphate + diphosphate. Its pathway is isoprenoid biosynthesis; farnesyl diphosphate biosynthesis; farnesyl diphosphate from geranyl diphosphate and isopentenyl diphosphate: step 1/1. The protein operates within isoprenoid biosynthesis; geranyl diphosphate biosynthesis; geranyl diphosphate from dimethylallyl diphosphate and isopentenyl diphosphate: step 1/1. Catalyzes the sequential condensation of isopentenyl pyrophosphate with the allylic pyrophosphates, dimethylallyl pyrophosphate, and then with the resultant geranylpyrophosphate to the ultimate product farnesyl pyrophosphate. The chain is Farnesyl pyrophosphate synthase 1 (FPS1) from Lupinus albus (White lupine).